Reading from the N-terminus, the 133-residue chain is ATP synthase epsilon chain (133 aa).

It belongs to the ATPase epsilon chain family. In terms of assembly, F-type ATPases have 2 components, CF(1) - the catalytic core - and CF(0) - the membrane proton channel. CF(1) has five subunits: alpha(3), beta(3), gamma(1), delta(1), epsilon(1). CF(0) has three main subunits: a, b and c.

The protein resides in the cell membrane. Its function is as follows. Produces ATP from ADP in the presence of a proton gradient across the membrane. This chain is ATP synthase epsilon chain, found in Halalkalibacterium halodurans (strain ATCC BAA-125 / DSM 18197 / FERM 7344 / JCM 9153 / C-125) (Bacillus halodurans).